Here is a 186-residue protein sequence, read N- to C-terminus: Peptidyl-tRNA hydrolase (186 aa).

A tRNA-binding site is contributed by Tyr-14. His-19 functions as the Proton acceptor in the catalytic mechanism. TRNA-binding residues include Tyr-64, Asn-66, and Asn-112.

It belongs to the PTH family. Monomer.

It localises to the cytoplasm. It carries out the reaction an N-acyl-L-alpha-aminoacyl-tRNA + H2O = an N-acyl-L-amino acid + a tRNA + H(+). Its function is as follows. Hydrolyzes ribosome-free peptidyl-tRNAs (with 1 or more amino acids incorporated), which drop off the ribosome during protein synthesis, or as a result of ribosome stalling. Catalyzes the release of premature peptidyl moieties from peptidyl-tRNA molecules trapped in stalled 50S ribosomal subunits, and thus maintains levels of free tRNAs and 50S ribosomes. The polypeptide is Peptidyl-tRNA hydrolase (Geobacillus thermodenitrificans (strain NG80-2)).